We begin with the raw amino-acid sequence, 253 residues long: Proteasome subunit alpha (253 aa).

Low complexity predominate over residues 232-242; the sequence is AAGASTAGEAG. The tract at residues 232 to 253 is disordered; it reads AAGASTAGEAGSAEDEGSDDEK. Positions 243–253 are enriched in acidic residues; that stretch reads SAEDEGSDDEK.

It belongs to the peptidase T1A family. In terms of assembly, the 20S proteasome core is composed of 14 alpha and 14 beta subunits that assemble into four stacked heptameric rings, resulting in a barrel-shaped structure. The two inner rings, each composed of seven catalytic beta subunits, are sandwiched by two outer rings, each composed of seven alpha subunits. The catalytic chamber with the active sites is on the inside of the barrel. Has a gated structure, the ends of the cylinder being occluded by the N-termini of the alpha-subunits. Is capped by the proteasome-associated ATPase, ARC.

The protein localises to the cytoplasm. Its pathway is protein degradation; proteasomal Pup-dependent pathway. The formation of the proteasomal ATPase ARC-20S proteasome complex, likely via the docking of the C-termini of ARC into the intersubunit pockets in the alpha-rings, may trigger opening of the gate for substrate entry. Interconversion between the open-gate and close-gate conformations leads to a dynamic regulation of the 20S proteasome proteolysis activity. Its function is as follows. Component of the proteasome core, a large protease complex with broad specificity involved in protein degradation. The protein is Proteasome subunit alpha of Streptomyces avermitilis (strain ATCC 31267 / DSM 46492 / JCM 5070 / NBRC 14893 / NCIMB 12804 / NRRL 8165 / MA-4680).